The chain runs to 386 residues: Succinate--CoA ligase [ADP-forming] subunit beta (386 aa).

An ATP-grasp domain is found at 9–244 (KEILRSYGVS…LDEEDPKEVE (236 aa)). Residues K46, 53–55 (GRG), E99, C102, and E107 each bind ATP. Mg(2+) is bound by residues N199 and D213. Substrate contacts are provided by residues N264 and 321-323 (GIM).

This sequence belongs to the succinate/malate CoA ligase beta subunit family. Heterotetramer of two alpha and two beta subunits. Mg(2+) serves as cofactor.

It catalyses the reaction succinate + ATP + CoA = succinyl-CoA + ADP + phosphate. The catalysed reaction is GTP + succinate + CoA = succinyl-CoA + GDP + phosphate. It functions in the pathway carbohydrate metabolism; tricarboxylic acid cycle; succinate from succinyl-CoA (ligase route): step 1/1. In terms of biological role, succinyl-CoA synthetase functions in the citric acid cycle (TCA), coupling the hydrolysis of succinyl-CoA to the synthesis of either ATP or GTP and thus represents the only step of substrate-level phosphorylation in the TCA. The beta subunit provides nucleotide specificity of the enzyme and binds the substrate succinate, while the binding sites for coenzyme A and phosphate are found in the alpha subunit. The chain is Succinate--CoA ligase [ADP-forming] subunit beta from Geobacillus thermodenitrificans (strain NG80-2).